The primary structure comprises 200 residues: RNA polymerase I-specific transcription initiation factor rrn11 (200 aa).

Its subcellular location is the nucleus. Functionally, subunit of a multiprotein complex essential for the initiation of rDNA transcription by RNA polymerase I. Binding to the DNA template is dependent on the initial binding of other factors. This is RNA polymerase I-specific transcription initiation factor rrn11 (rrn11) from Schizosaccharomyces pombe (strain 972 / ATCC 24843) (Fission yeast).